Consider the following 497-residue polypeptide: FAD-linked oxidoreductase fmqD (497 aa).

The N-terminal stretch at 1 to 17 (MQYIPFLISGLVPVALS) is a signal peptide. Positions 68 to 243 (NDPSYVATVK…TSATYRIYDQ (176 aa)) constitute an FAD-binding PCMH-type domain. N-linked (GlcNAc...) asparagine glycosylation is found at Asn-99, Asn-261, and Asn-288.

It belongs to the oxygen-dependent FAD-linked oxidoreductase family.

The protein resides in the secreted. It is found in the cell wall. It functions in the pathway alkaloid biosynthesis. FAD-linked oxidoreductase; part of the gene cluster that mediates the biosynthesis of the antitumor fumiquinazolines that confer a dual-usage capability to defend against phagocytes in the environment and animal hosts. The simplest member is fumiquinazoline F (FQF) with a 6-6-6 tricyclic core derived from anthranilic acid (Ant), tryptophan (Trp), and alanine (Ala). The trimodular NRPS fmqA is responsible for FQF formation. Modules 1, 2 and 3 of fmqA are predicted to activate and load Ant, Trp and Ala, respectively, providing for the assembly of an Ant-Trp-Ala-S-enzyme intermediate that would undergo double cyclization for chain release and generation of the tricyclic 6-6-6 product fumiquinazoline F. The presence of an E domain predicted for module 2 of fmqA is consistent with epimerization of L-Trp to D-Trp during assembly to generate the R-stereocenter at C14 of FQF. The FAD-dependent monooxygenase fmqB and the monomodular NRPS fmqC then maturate FQF to FQA. FmqB oxidizes the 2',3'-double bond of the indole side chain of FQF, and fmqC activates L-Ala as the adenylate, installs it as the pantetheinyl thioester on its carrier protein domain, and acylates the oxidized indole for subsequent intramolecular cyclization to create the 6-5-5-imidazolindolone of FQA. The FAD-linked oxidoreductase fmqD introduces a third layer of scaffold complexity by converting FQA to the spirohemiaminal FQC, presumably by catalyzing the formation of a transient imine within the pyrazinone ring. FQC subsequently converts nonenzymatically to the known cyclic aminal FQD. The protein is FAD-linked oxidoreductase fmqD of Aspergillus fumigatus (strain ATCC MYA-4609 / CBS 101355 / FGSC A1100 / Af293) (Neosartorya fumigata).